A 1699-amino-acid chain; its full sequence is DNA polymerase (1699 aa).

2 consecutive DOD-type homing endonuclease domains span residues 770–903 and 1222–1361; these read LLGY…SLGI and LIGL…LVGV.

Belongs to the DNA polymerase type-B family. This protein undergoes a protein self splicing that involves a post-translational excision of the intervening region (intein) followed by peptide ligation.

It catalyses the reaction DNA(n) + a 2'-deoxyribonucleoside 5'-triphosphate = DNA(n+1) + diphosphate. In addition to polymerase activity, this DNA polymerase exhibits 3' to 5' exonuclease activity. Its function is as follows. PI-TspGE8I and PI-TspGE8II are endonucleases. The polypeptide is DNA polymerase (pol) (Thermococcus sp. (strain GE8)).